The sequence spans 534 residues: CTP synthase (534 aa).

Residues 1–265 (MKYIIVTGGV…SNYLLKKLIL (265 aa)) form an amidoligase domain region. Residue serine 12 coordinates CTP. Serine 12 is a UTP binding site. Position 13 to 18 (13 to 18 (GLGKGI)) interacts with ATP. Tyrosine 53 lines the L-glutamine pocket. ATP is bound at residue aspartate 70. Mg(2+)-binding residues include aspartate 70 and glutamate 140. CTP is bound by residues 147–149 (DIE), 186–191 (KTKPTQ), and lysine 222. UTP contacts are provided by residues 186–191 (KTKPTQ) and lysine 222. Residues 289 to 530 (NVAIVGKYTH…MGAMLKKSKE (242 aa)) enclose the Glutamine amidotransferase type-1 domain. Residue glycine 352 coordinates L-glutamine. Residue cysteine 379 is the Nucleophile; for glutamine hydrolysis of the active site. L-glutamine contacts are provided by residues 380-383 (LGMQ), glutamate 403, and arginine 460. Catalysis depends on residues histidine 503 and glutamate 505.

It belongs to the CTP synthase family. In terms of assembly, homotetramer.

It carries out the reaction UTP + L-glutamine + ATP + H2O = CTP + L-glutamate + ADP + phosphate + 2 H(+). The enzyme catalyses L-glutamine + H2O = L-glutamate + NH4(+). It catalyses the reaction UTP + NH4(+) + ATP = CTP + ADP + phosphate + 2 H(+). It participates in pyrimidine metabolism; CTP biosynthesis via de novo pathway; CTP from UDP: step 2/2. Its activity is regulated as follows. Allosterically activated by GTP, when glutamine is the substrate; GTP has no effect on the reaction when ammonia is the substrate. The allosteric effector GTP functions by stabilizing the protein conformation that binds the tetrahedral intermediate(s) formed during glutamine hydrolysis. Inhibited by the product CTP, via allosteric rather than competitive inhibition. Functionally, catalyzes the ATP-dependent amination of UTP to CTP with either L-glutamine or ammonia as the source of nitrogen. Regulates intracellular CTP levels through interactions with the four ribonucleotide triphosphates. This is CTP synthase from Methanococcoides burtonii (strain DSM 6242 / NBRC 107633 / OCM 468 / ACE-M).